Reading from the N-terminus, the 145-residue chain is Transcription antitermination protein NusB (145 aa).

Belongs to the NusB family.

In terms of biological role, involved in transcription antitermination. Required for transcription of ribosomal RNA (rRNA) genes. Binds specifically to the boxA antiterminator sequence of the ribosomal RNA (rrn) operons. The polypeptide is Transcription antitermination protein NusB (Citrifermentans bemidjiense (strain ATCC BAA-1014 / DSM 16622 / JCM 12645 / Bem) (Geobacter bemidjiensis)).